The sequence spans 180 residues: Transcriptional repressor NrdR (180 aa).

The segment at 3–34 (CPYCQNTSSRVLESRSTEAGQSIRRRRECLQC) is a zinc-finger region. The ATP-cone domain occupies 49-139 (ISVLKKDKSK…VYGEFKGITD (91 aa)). The interval 148-180 (QQEERESSSSPEWSDAGEEATVIEDSSQVMASS) is disordered. Positions 171–180 (EDSSQVMASS) are enriched in polar residues.

It belongs to the NrdR family. It depends on Zn(2+) as a cofactor.

Its function is as follows. Negatively regulates transcription of bacterial ribonucleotide reductase nrd genes and operons by binding to NrdR-boxes. In Gloeothece citriformis (strain PCC 7424) (Cyanothece sp. (strain PCC 7424)), this protein is Transcriptional repressor NrdR.